Reading from the N-terminus, the 129-residue chain is Sigma factor-binding protein Crl (129 aa).

An essential for activity region spans residues 99–119; it reads TQAEFHKKLVKTLRERFEISV.

This sequence belongs to the Crl family.

It localises to the cytoplasm. Functionally, binds to the sigma-S subunit of RNA polymerase, activating expression of sigma-S-regulated genes. Stimulates RNA polymerase holoenzyme formation and may bind to several other sigma factors, such as sigma-70 and sigma-32. This Vibrio cholerae serotype O1 (strain ATCC 39541 / Classical Ogawa 395 / O395) protein is Sigma factor-binding protein Crl.